Here is a 499-residue protein sequence, read N- to C-terminus: Aspartyl/glutamyl-tRNA(Asn/Gln) amidotransferase subunit B (499 aa).

This sequence belongs to the GatB/GatE family. GatB subfamily. In terms of assembly, heterotrimer of A, B and C subunits.

It catalyses the reaction L-glutamyl-tRNA(Gln) + L-glutamine + ATP + H2O = L-glutaminyl-tRNA(Gln) + L-glutamate + ADP + phosphate + H(+). It carries out the reaction L-aspartyl-tRNA(Asn) + L-glutamine + ATP + H2O = L-asparaginyl-tRNA(Asn) + L-glutamate + ADP + phosphate + 2 H(+). In terms of biological role, allows the formation of correctly charged Asn-tRNA(Asn) or Gln-tRNA(Gln) through the transamidation of misacylated Asp-tRNA(Asn) or Glu-tRNA(Gln) in organisms which lack either or both of asparaginyl-tRNA or glutaminyl-tRNA synthetases. The reaction takes place in the presence of glutamine and ATP through an activated phospho-Asp-tRNA(Asn) or phospho-Glu-tRNA(Gln). The polypeptide is Aspartyl/glutamyl-tRNA(Asn/Gln) amidotransferase subunit B (Bartonella bacilliformis (strain ATCC 35685 / KC583 / Herrer 020/F12,63)).